Here is a 180-residue protein sequence, read N- to C-terminus: NADH-quinone oxidoreductase subunit I (180 aa).

4Fe-4S ferredoxin-type domains lie at 50–80 (LTRD…LQKA) and 90–119 (EFFR…LTPD). Positions 60, 63, 66, 70, 99, 102, 105, and 109 each coordinate [4Fe-4S] cluster.

This sequence belongs to the complex I 23 kDa subunit family. As to quaternary structure, NDH-1 is composed of 13 different subunits. Subunits NuoA, H, J, K, L, M, N constitute the membrane sector of the complex. [4Fe-4S] cluster serves as cofactor.

The protein localises to the cell inner membrane. It carries out the reaction a quinone + NADH + 5 H(+)(in) = a quinol + NAD(+) + 4 H(+)(out). Functionally, NDH-1 shuttles electrons from NADH, via FMN and iron-sulfur (Fe-S) centers, to quinones in the respiratory chain. The immediate electron acceptor for the enzyme in this species is believed to be ubiquinone. Couples the redox reaction to proton translocation (for every two electrons transferred, four hydrogen ions are translocated across the cytoplasmic membrane), and thus conserves the redox energy in a proton gradient. This is NADH-quinone oxidoreductase subunit I from Pectobacterium atrosepticum (strain SCRI 1043 / ATCC BAA-672) (Erwinia carotovora subsp. atroseptica).